We begin with the raw amino-acid sequence, 163 residues long: ATP synthase subunit b', chloroplastic (163 aa).

Residues 26–46 (ATLPLMAVQILLFMVILNAVF) traverse the membrane as a helical segment.

Belongs to the ATPase B chain family. F-type ATPases have 2 components, F(1) - the catalytic core - and F(0) - the membrane proton channel. F(1) has five subunits: alpha(3), beta(3), gamma(1), delta(1), epsilon(1). F(0) has four main subunits: a(1), b(1), b'(1) and c(10-14). The alpha and beta chains form an alternating ring which encloses part of the gamma chain. F(1) is attached to F(0) by a central stalk formed by the gamma and epsilon chains, while a peripheral stalk is formed by the delta, b and b' chains.

Its subcellular location is the plastid. The protein localises to the chloroplast thylakoid membrane. Functionally, f(1)F(0) ATP synthase produces ATP from ADP in the presence of a proton or sodium gradient. F-type ATPases consist of two structural domains, F(1) containing the extramembraneous catalytic core and F(0) containing the membrane proton channel, linked together by a central stalk and a peripheral stalk. During catalysis, ATP synthesis in the catalytic domain of F(1) is coupled via a rotary mechanism of the central stalk subunits to proton translocation. In terms of biological role, component of the F(0) channel, it forms part of the peripheral stalk, linking F(1) to F(0). The b'-subunit is a diverged and duplicated form of b found in plants and photosynthetic bacteria. The polypeptide is ATP synthase subunit b', chloroplastic (Guillardia theta (Cryptophyte)).